The primary structure comprises 563 residues: Proline--tRNA ligase (563 aa).

The protein belongs to the class-II aminoacyl-tRNA synthetase family. ProS type 1 subfamily. In terms of assembly, homodimer.

The protein resides in the cytoplasm. It carries out the reaction tRNA(Pro) + L-proline + ATP = L-prolyl-tRNA(Pro) + AMP + diphosphate. Catalyzes the attachment of proline to tRNA(Pro) in a two-step reaction: proline is first activated by ATP to form Pro-AMP and then transferred to the acceptor end of tRNA(Pro). As ProRS can inadvertently accommodate and process non-cognate amino acids such as alanine and cysteine, to avoid such errors it has two additional distinct editing activities against alanine. One activity is designated as 'pretransfer' editing and involves the tRNA(Pro)-independent hydrolysis of activated Ala-AMP. The other activity is designated 'posttransfer' editing and involves deacylation of mischarged Ala-tRNA(Pro). The misacylated Cys-tRNA(Pro) is not edited by ProRS. This is Proline--tRNA ligase from Persephonella marina (strain DSM 14350 / EX-H1).